Here is a 437-residue protein sequence, read N- to C-terminus: Protein PhoH2 (437 aa).

In terms of domain architecture, PINc spans 7-134 (RTYVLDTSVL…LVSKDIPLRV (128 aa)).

It in the N-terminal section; belongs to the PINc/VapC protein family. This sequence in the C-terminal section; belongs to the PhoH family. As to quaternary structure, interacts with antitoxin PhoAT. It depends on Mg(2+) as a cofactor.

The catalysed reaction is n ATP + n H2O + wound RNA = n ADP + n phosphate + unwound RNA.. It carries out the reaction ATP + H2O = ADP + phosphate + H(+). It catalyses the reaction GTP + H2O = GDP + phosphate + H(+). In terms of biological role, toxic component of a type II toxin-antitoxin (TA) system. The possible cognate antitoxin is PhoAT; the toxin gene can be expressed in the absence of the antitoxin gene in an endogenous mc(2)155 double deletion. Unwinds and/or cleaves 5'-tailed RNA in vitro that starts with 5'-AC, the reaction requires hydrolyzable ATP; double-stranded (ds)RNA and dsDNA are not unwound or cleaved. Has ATPase and GTPase activities. The chain is Protein PhoH2 from Mycolicibacterium smegmatis (strain ATCC 700084 / mc(2)155) (Mycobacterium smegmatis).